The sequence spans 244 residues: MSMLCYTLIIAFLIGIWAAPKSEDNVPLGSPATSDLSDTSCAQTHEGLKTSRNTDQRHPAPKKAEDQELGSVANIIVDPKLFQKRRFQSSRVLFSTQPPPLSRDEQSVEFLDNEDTLNRNIRAKRENHPVHNQGEHSVCDSVSDWVIKTTATDIRGNMVTVMVDINRDNEVYKQYFFETKCRNPNPNPVQSECRGIDSRLWNSYCTTTRTFVRALTMEGNQASWRFIRIDTACVCVIIRKTDNF.

Positions 1–18 (MSMLCYTLIIAFLIGIWA) are cleaved as a signal peptide. A propeptide spanning residues 19–125 (APKSEDNVPL…TLNRNIRAKR (107 aa)) is cleaved from the precursor. A compositionally biased stretch (basic and acidic residues) spans 47–66 (GLKTSRNTDQRHPAPKKAED). The interval 47-67 (GLKTSRNTDQRHPAPKKAEDQ) is disordered. 3 cysteine pairs are disulfide-bonded: Cys139-Cys205, Cys181-Cys233, and Cys193-Cys235.

The protein belongs to the NGF-beta family. In terms of assembly, homodimer; non-covalently linked. Expressed by the venom gland.

It localises to the secreted. Functionally, nerve growth factor is important for the development and maintenance of the sympathetic and sensory nervous systems. It stimulates division and differentiation of sympathetic and embryonic sensory neurons as well as basal forebrain cholinergic neurons in the brain. Its relevance in the snake venom is not clear. However, it has been shown to inhibit metalloproteinase-dependent proteolysis of platelet glycoprotein Ib alpha, suggesting a metalloproteinase inhibition to prevent metalloprotease autodigestion and/or protection against prey proteases. Binds a lipid between the two protein chains in the homodimer. The lipid-bound form promotes histamine relase from mouse mast cells, contrary to the lipid-free form. The protein is Venom nerve growth factor 3 of Notechis scutatus scutatus (Mainland tiger snake).